We begin with the raw amino-acid sequence, 314 residues long: Deoxymugineic acid synthase 1-D (314 aa).

The disordered stretch occupies residues 1–21; sequence MGAGEKTAAGMPRIGMGTAVQ. NADP(+) is bound at residue aspartate 44. The active-site Proton donor is the tyrosine 49. Histidine 112 serves as a coordination point for substrate. NADP(+)-binding positions include 158–159, glutamine 180, 258–266, and 273–281; these read AN, FDEARMREN, and ELTEEERLR.

The protein belongs to the aldo/keto reductase family. As to expression, mostly expressed in root tissues, observed, at low levels, in mesocotyl and embryonic roots, seedling roots, crown and seedling leafes, mature bracts, anthers, pistil, caryopsis and embryos.

The catalysed reaction is 2'-deoxymugineate + NAD(+) = 3''-deamino-3''-oxonicotianamine + NADH + H(+). It carries out the reaction 2'-deoxymugineate + NADP(+) = 3''-deamino-3''-oxonicotianamine + NADPH + H(+). Its pathway is siderophore biosynthesis. Functionally, catalyzes the reduction of a 3''-keto intermediate during the biosynthesis of 2'-deoxymugineic acid (DMA) from L-Met. Involved in the formation of phytosiderophores (MAs) belonging to the mugineic acid family and required to acquire iron. The sequence is that of Deoxymugineic acid synthase 1-D from Triticum aestivum (Wheat).